The chain runs to 347 residues: ATP-dependent kinase YFH7 (347 aa).

33–41 is a binding site for ATP; the sequence is GPPGSGKST.

Belongs to the YFH7 family.

In terms of biological role, ATP-dependent kinase that could be involved in endoplasmic reticulum membrane assembly. The sequence is that of ATP-dependent kinase YFH7 (YFH7) from Lachancea thermotolerans (strain ATCC 56472 / CBS 6340 / NRRL Y-8284) (Yeast).